Consider the following 320-residue polypeptide: Aminoacyl tRNA synthase complex-interacting multifunctional protein 2 (320 aa).

The interval 31–52 (HSKTTSPATDAGHVQETSEPSL) is disordered. Ser36 bears the Phosphoserine mark. An interaction with PRKN region spans residues 82–162 (TPDADLDVTN…HTHSSVKNVP (81 aa)). The interval 162-225 (PENLLKCFGE…FLFSLFGQKH (64 aa)) is interaction with TP53. Residues 220–317 (LFGQKHSAVN…NLVPFSTALQ (98 aa)) form the GST C-terminal domain.

As to quaternary structure, part of the multisynthetase complex (MSC), a multisubunit complex that groups tRNA ligases for Arg (RARS1), Asp (DARS1), Gln (QARS1), Ile (IARS1), Leu (LARS1), Lys (KARS1), Met (MARS1) the bifunctional ligase for Glu and Pro (EPRS1) and the auxiliary subunits AIMP1/p43, AIMP2/p38 and EEF1E1/p18. Interacts (via N-terminus) with KARS1. Interacts with EPRS1. Forms a linear complex that contains MARS1, EEF1E1, EPRS1 and AIMP2 that is at the core of the multisubunit complex. Binds FUBP1 (via C-terminus). Interacts in both its unphosphorylated and phosphorylated forms with p53/TP53 (via N-terminus) in the nucleus following UV irradiation. Interacts (via N-terminus) with PRKN/parkin (via first RING-type domain). Interacts with TARS3. Phosphorylated on serine residues in response to UV irradiation. Post-translationally, ubiquitinated by PRKN, leading to its degradation by the proteasome.

Its subcellular location is the cytoplasm. It localises to the cytosol. The protein localises to the nucleus. Functionally, required for assembly and stability of the aminoacyl-tRNA synthase complex. Mediates ubiquitination and degradation of FUBP1, a transcriptional activator of MYC, leading to MYC down-regulation which is required for aveolar type II cell differentiation. Blocks MDM2-mediated ubiquitination and degradation of p53/TP53. Functions as a proapoptotic factor. The polypeptide is Aminoacyl tRNA synthase complex-interacting multifunctional protein 2 (AIMP2) (Cricetulus griseus (Chinese hamster)).